Reading from the N-terminus, the 425-residue chain is Serine--tRNA ligase (425 aa).

Residue 228–230 (TAE) participates in L-serine binding. 259–261 (RSE) serves as a coordination point for ATP. Glu-282 is an L-serine binding site. 346–349 (EIAS) is an ATP binding site. Ser-382 provides a ligand contact to L-serine.

It belongs to the class-II aminoacyl-tRNA synthetase family. Type-1 seryl-tRNA synthetase subfamily. As to quaternary structure, homodimer. The tRNA molecule binds across the dimer.

The protein resides in the cytoplasm. The enzyme catalyses tRNA(Ser) + L-serine + ATP = L-seryl-tRNA(Ser) + AMP + diphosphate + H(+). The catalysed reaction is tRNA(Sec) + L-serine + ATP = L-seryl-tRNA(Sec) + AMP + diphosphate + H(+). Its pathway is aminoacyl-tRNA biosynthesis; selenocysteinyl-tRNA(Sec) biosynthesis; L-seryl-tRNA(Sec) from L-serine and tRNA(Sec): step 1/1. Its function is as follows. Catalyzes the attachment of serine to tRNA(Ser). Is also able to aminoacylate tRNA(Sec) with serine, to form the misacylated tRNA L-seryl-tRNA(Sec), which will be further converted into selenocysteinyl-tRNA(Sec). The sequence is that of Serine--tRNA ligase from Rickettsia rickettsii (strain Iowa).